Here is a 199-residue protein sequence, read N- to C-terminus: MNETNDIDQLIYLFSKLPGLGSRSARRIVLYLLQDKDVRLKSLINNLINIDKKIVKCEICGNMDTENICRICSSEYRDKSVIAIVETVAELWAMERSGNFKGLYHVLGYNLSAASRKNPSMLRLPELLTRCFAANIKEVIIATNSTLEGQTTAYFITEYLKEHPAKISRLASGIPIGGELDYLDEGTLSAAINLRQPFE.

The segment at 57–72 (CEICGNMDTENICRIC) adopts a C4-type zinc-finger fold. The Toprim domain maps to 80 to 175 (SVIAIVETVA…KISRLASGIP (96 aa)).

This sequence belongs to the RecR family.

Its function is as follows. May play a role in DNA repair. It seems to be involved in an RecBC-independent recombinational process of DNA repair. It may act with RecF and RecO. This Rickettsia canadensis (strain McKiel) protein is Recombination protein RecR.